The following is a 261-amino-acid chain: DNA repair protein RecO (261 aa).

The protein belongs to the RecO family.

Involved in DNA repair and RecF pathway recombination. This is DNA repair protein RecO from Chlorobium limicola (strain DSM 245 / NBRC 103803 / 6330).